The chain runs to 290 residues: MIYYGTMFDHKVRFSIVRMREVVEEARNRHVLSYLATVVLGRALIGAALVTPWLAEKERWTLDIEGSGPIRRVVAQSTSEFTVRGYVANPKVELPLNEKGKFDVAGAIGQGVLRVVRDLGLKTPFVSQVPLVSGEIAEDLAYYFAVSEQIPSAFSIGVLVDSGGVKIAGGFAVQIIDRTLEQEKVELIERNIKNLPYITELFQKAEPLDVLERIFGEKVGFVETAEIRYKCDCNREKAKNALLVLDKKELEDMRKEGKGEVVCKWCNTKYVFSEEELEELLKFKVDNSGS.

2 disulfides stabilise this stretch: Cys231-Cys233 and Cys263-Cys266.

Belongs to the HSP33 family. Under oxidizing conditions two disulfide bonds are formed involving the reactive cysteines. Under reducing conditions zinc is bound to the reactive cysteines and the protein is inactive.

The protein localises to the cytoplasm. Redox regulated molecular chaperone. Protects both thermally unfolding and oxidatively damaged proteins from irreversible aggregation. Plays an important role in the bacterial defense system toward oxidative stress. The protein is 33 kDa chaperonin of Thermotoga sp. (strain RQ2).